Consider the following 1343-residue polypeptide: DNA-directed RNA polymerase subunit beta (1343 aa).

It belongs to the RNA polymerase beta chain family. The RNAP catalytic core consists of 2 alpha, 1 beta, 1 beta' and 1 omega subunit. When a sigma factor is associated with the core the holoenzyme is formed, which can initiate transcription.

The catalysed reaction is RNA(n) + a ribonucleoside 5'-triphosphate = RNA(n+1) + diphosphate. Functionally, DNA-dependent RNA polymerase catalyzes the transcription of DNA into RNA using the four ribonucleoside triphosphates as substrates. This is DNA-directed RNA polymerase subunit beta from Haemophilus influenzae (strain ATCC 51907 / DSM 11121 / KW20 / Rd).